Consider the following 384-residue polypeptide: Zinc finger CCCH domain-containing protein 12 (384 aa).

2 disordered regions span residues 1–32 (MSHHRRDSGGDVVHVIPTNNPPPDNWFPNLGD) and 46–81 (WAMNPDNTSGDNNGPPNKKTRGSPSSSSATTTSAAS). The span at 50 to 60 (PDNTSGDNNGP) shows a compositional bias: polar residues. The span at 70 to 81 (SSSSATTTSAAS) shows a compositional bias: low complexity. 2 consecutive C3H1-type zinc fingers follow at residues 91 to 118 (FFKTKLCCKFRAGTCPYITNCNFAHTVE) and 172 to 200 (SFKGRHCKKFYTEEGCPYGESCTFLHDEA). The tract at residues 211-231 (LGPGGYGSGGGGGSGGGSVGG) is disordered. Residues 212–231 (GPGGYGSGGGGGSGGGSVGG) are compositionally biased toward gly residues. Residues 260–288 (NWKTRICNKWEITGYCPFGAKCHFAHGAA) form a C3H1-type 3 zinc finger. The disordered stretch occupies residues 299–335 (EEEGKDGVSPNPDTKQTVQNPKGLSDTTTLLSPGVPH). A compositionally biased stretch (polar residues) spans 309 to 329 (NPDTKQTVQNPKGLSDTTTLL).

The sequence is that of Zinc finger CCCH domain-containing protein 12 from Arabidopsis thaliana (Mouse-ear cress).